We begin with the raw amino-acid sequence, 238 residues long: Tetrahydromethanopterin S-methyltransferase subunit A 1 (238 aa).

At 2–218 the chain is on the cytoplasmic side; it reads VEKKSPAEGW…RMFAGMYSGK (217 aa). 5-hydroxybenzimidazolylcob(I)amide is bound at residue His-84. A helical membrane pass occupies residues 219–237; the sequence is VQGIMIGLAFTLTLGILLL. Val-238 is a topological domain (extracellular).

Belongs to the MtrA family. In terms of assembly, the complex is composed of 8 subunits; MtrA, MtrB, MtrC, MtrD, MtrE, MtrF, MtrG and MtrH. The cofactor is 5-hydroxybenzimidazolylcob(I)amide.

It localises to the cell membrane. It carries out the reaction 5-methyl-5,6,7,8-tetrahydromethanopterin + coenzyme M + 2 Na(+)(in) = 5,6,7,8-tetrahydromethanopterin + methyl-coenzyme M + 2 Na(+)(out). The protein operates within one-carbon metabolism; methanogenesis from CO(2); methyl-coenzyme M from 5,10-methylene-5,6,7,8-tetrahydromethanopterin: step 2/2. Its function is as follows. Part of a complex that catalyzes the formation of methyl-coenzyme M and tetrahydromethanopterin from coenzyme M and methyl-tetrahydromethanopterin. This is an energy-conserving, sodium-ion translocating step. The sequence is that of Tetrahydromethanopterin S-methyltransferase subunit A 1 from Methanothermobacter thermautotrophicus (strain ATCC 29096 / DSM 1053 / JCM 10044 / NBRC 100330 / Delta H) (Methanobacterium thermoautotrophicum).